Reading from the N-terminus, the 316-residue chain is Mitochondrial GTPase 1 (316 aa).

Residues 28-203 (MKQMQQKLKQ…LLDTPGILKP (176 aa)) form the CP-type G domain. GTP is bound by residues 73 to 76 (NKKD), 147 to 152 (NVGKSS), and G199.

The protein belongs to the TRAFAC class YlqF/YawG GTPase family. MTG1 subfamily.

It localises to the mitochondrion inner membrane. Its function is as follows. Plays a role in the regulation of the mitochondrial ribosome assembly and of translational activity. Displays mitochondrial GTPase activity. The protein is Mitochondrial GTPase 1 of Aedes aegypti (Yellowfever mosquito).